We begin with the raw amino-acid sequence, 83 residues long: MEDERIYTIPLRDVTNNSPSTKRAPRAMRKIRDFLKRHTKSDNIKIDNSINEKVWERSLNKIPARIRVKVVKEDDMVIATLIK.

Belongs to the eukaryotic ribosomal protein eL31 family.

This chain is Large ribosomal subunit protein eL31, found in Methanococcus aeolicus (strain ATCC BAA-1280 / DSM 17508 / OCM 812 / Nankai-3).